Reading from the N-terminus, the 34-residue chain is Ornithine carbamoyltransferase, catabolic (34 aa).

Belongs to the aspartate/ornithine carbamoyltransferase superfamily. OTCase family. In terms of assembly, probably nonameric or dodecameric.

It localises to the cytoplasm. It catalyses the reaction carbamoyl phosphate + L-ornithine = L-citrulline + phosphate + H(+). It participates in amino-acid degradation; L-arginine degradation via ADI pathway; carbamoyl phosphate from L-arginine: step 2/2. In Pseudomonas putida (Arthrobacter siderocapsulatus), this protein is Ornithine carbamoyltransferase, catabolic (arcB).